The following is a 206-amino-acid chain: Uracil phosphoribosyltransferase (206 aa).

5-phospho-alpha-D-ribose 1-diphosphate contacts are provided by residues Arg76, Arg101, and 128 to 136 (DPMLATGGS). Residues Ile191 and 196–198 (GDA) each bind uracil. Residue Asp197 participates in 5-phospho-alpha-D-ribose 1-diphosphate binding.

The protein belongs to the UPRTase family. It depends on Mg(2+) as a cofactor.

The enzyme catalyses UMP + diphosphate = 5-phospho-alpha-D-ribose 1-diphosphate + uracil. Its pathway is pyrimidine metabolism; UMP biosynthesis via salvage pathway; UMP from uracil: step 1/1. Its activity is regulated as follows. Allosterically activated by GTP. Catalyzes the conversion of uracil and 5-phospho-alpha-D-ribose 1-diphosphate (PRPP) to UMP and diphosphate. This Malacoplasma penetrans (strain HF-2) (Mycoplasma penetrans) protein is Uracil phosphoribosyltransferase.